The primary structure comprises 213 residues: Endonuclease III (213 aa).

The 20-residue stretch at 101 to 120 folds into the HhH domain; it reads LEELLKLPGVGRKTANIVLW. C180, C187, C190, and C196 together coordinate [4Fe-4S] cluster.

Belongs to the Nth/MutY family. [4Fe-4S] cluster is required as a cofactor.

It carries out the reaction 2'-deoxyribonucleotide-(2'-deoxyribose 5'-phosphate)-2'-deoxyribonucleotide-DNA = a 3'-end 2'-deoxyribonucleotide-(2,3-dehydro-2,3-deoxyribose 5'-phosphate)-DNA + a 5'-end 5'-phospho-2'-deoxyribonucleoside-DNA + H(+). Its function is as follows. DNA repair enzyme that has both DNA N-glycosylase activity and AP-lyase activity. The DNA N-glycosylase activity releases various damaged pyrimidines from DNA by cleaving the N-glycosidic bond, leaving an AP (apurinic/apyrimidinic) site. The AP-lyase activity cleaves the phosphodiester bond 3' to the AP site by a beta-elimination, leaving a 3'-terminal unsaturated sugar and a product with a terminal 5'-phosphate. In Thermotoga maritima (strain ATCC 43589 / DSM 3109 / JCM 10099 / NBRC 100826 / MSB8), this protein is Endonuclease III.